The chain runs to 677 residues: UvrABC system protein B (677 aa).

In terms of domain architecture, Helicase ATP-binding spans 27-414 (ANLGHGVRDQ…SQGVIAEQII (388 aa)). 40–47 (GVTGSGKT) contacts ATP. The Beta-hairpin signature appears at 93-116 (YYDYYQPEAYVPASDTYIEKDSSI). In terms of domain architecture, Helicase C-terminal spans 432–594 (QVDDLLAECR…IEPRTIRKSL (163 aa)). The UVR domain occupies 638–673 (AKHIQKLEREMREAAKELEFERAATLRDRIRLLRER).

The protein belongs to the UvrB family. In terms of assembly, forms a heterotetramer with UvrA during the search for lesions. Interacts with UvrC in an incision complex.

It is found in the cytoplasm. Functionally, the UvrABC repair system catalyzes the recognition and processing of DNA lesions. A damage recognition complex composed of 2 UvrA and 2 UvrB subunits scans DNA for abnormalities. Upon binding of the UvrA(2)B(2) complex to a putative damaged site, the DNA wraps around one UvrB monomer. DNA wrap is dependent on ATP binding by UvrB and probably causes local melting of the DNA helix, facilitating insertion of UvrB beta-hairpin between the DNA strands. Then UvrB probes one DNA strand for the presence of a lesion. If a lesion is found the UvrA subunits dissociate and the UvrB-DNA preincision complex is formed. This complex is subsequently bound by UvrC and the second UvrB is released. If no lesion is found, the DNA wraps around the other UvrB subunit that will check the other stand for damage. This is UvrABC system protein B from Nitratidesulfovibrio vulgaris (strain ATCC 29579 / DSM 644 / CCUG 34227 / NCIMB 8303 / VKM B-1760 / Hildenborough) (Desulfovibrio vulgaris).